The chain runs to 158 residues: Deoxyuridine 5'-triphosphate nucleotidohydrolase (158 aa).

Substrate-binding positions include 75–77 (RSG), Asn88, 92–94 (TVD), and Lys102.

The protein belongs to the dUTPase family. The cofactor is Mg(2+).

The catalysed reaction is dUTP + H2O = dUMP + diphosphate + H(+). It participates in pyrimidine metabolism; dUMP biosynthesis; dUMP from dCTP (dUTP route): step 2/2. In terms of biological role, this enzyme is involved in nucleotide metabolism: it produces dUMP, the immediate precursor of thymidine nucleotides and it decreases the intracellular concentration of dUTP so that uracil cannot be incorporated into DNA. The sequence is that of Deoxyuridine 5'-triphosphate nucleotidohydrolase from Bifidobacterium longum subsp. infantis (strain ATCC 15697 / DSM 20088 / JCM 1222 / NCTC 11817 / S12).